A 337-amino-acid chain; its full sequence is Putative transcription activator protein HfaB (337 aa).

Polar residues predominate over residues 303 to 313 (AYNNLGTNNAQ). The disordered stretch occupies residues 303 to 337 (AYNNLGTNNAQTRDDPSRWNARRDPDIRDAKRGRY). Residues 314–337 (TRDDPSRWNARRDPDIRDAKRGRY) are compositionally biased toward basic and acidic residues.

In terms of biological role, required for the attachment of the holdfast to the cell. May be involved in the positive regulation of hfaC. The polypeptide is Putative transcription activator protein HfaB (hfaB) (Caulobacter vibrioides (strain ATCC 19089 / CIP 103742 / CB 15) (Caulobacter crescentus)).